A 963-amino-acid chain; its full sequence is Kinesin-1 heavy chain (963 aa).

Position 2 is an N-acetylalanine (alanine 2). Positions 8–325 (NIKVMCRFRP…LLFGQRAKTI (318 aa)) constitute a Kinesin motor domain. 85–92 (GQTSSGKT) contacts ATP. A Glycyl lysine isopeptide (Lys-Gly) (interchain with G-Cter in SUMO2) cross-link involves residue lysine 213. The stretch at 330–913 (CVNVELTAEQ…EAVRSKNMAR (584 aa)) forms a coiled coil. A disordered region spans residues 908-963 (SKNMARRGHSAQIAKPIRPGQHPAASPTHPGAVRGGGSFVQNNQPVGLRGGGGKQA). The segment at 915–963 (GHSAQIAKPIRPGQHPAASPTHPGAVRGGGSFVQNNQPVGLRGGGGKQA) is globular. A phosphoserine mark is found at serine 933 and serine 945. At arginine 956 the chain carries Omega-N-methylarginine.

This sequence belongs to the TRAFAC class myosin-kinesin ATPase superfamily. Kinesin family. Kinesin subfamily. As to quaternary structure, oligomer composed of two heavy chains and two light chains. Interacts with GRIP1 and PPP1R42. Interacts with SYBU. Interacts with JAKMIP1. Interacts with PLEKHM2. Interacts with ECPAS. Interacts with ZFYVE27. Found in a complex with OGT, RHOT1, RHOT2 and TRAK1. Interacts with APP (via cytoplasmic domain). In terms of tissue distribution, expressed in the brain (at protein level). Expressed in the brain, liver, kidney, spleen, heart, lung and sciatic nerve.

It localises to the cytoplasm. Its subcellular location is the cytoskeleton. The protein localises to the cytolytic granule membrane. The protein resides in the lysosome membrane. Its function is as follows. Microtubule-dependent motor required for normal distribution of mitochondria and lysosomes. Can induce formation of neurite-like membrane protrusions in non-neuronal cells in a ZFYVE27-dependent manner. Regulates centrosome and nuclear positioning during mitotic entry. During the G2 phase of the cell cycle in a BICD2-dependent manner, antagonizes dynein function and drives the separation of nuclei and centrosomes. Required for anterograde axonal transportation of MAPK8IP3/JIP3 which is essential for MAPK8IP3/JIP3 function in axon elongation. Through binding with PLEKHM2 and ARL8B, directs lysosome movement toward microtubule plus ends. Involved in NK cell-mediated cytotoxicity. Drives the polarization of cytolytic granules and microtubule-organizing centers (MTOCs) toward the immune synapse between effector NK lymphocytes and target cells. This Rattus norvegicus (Rat) protein is Kinesin-1 heavy chain.